Here is a 355-residue protein sequence, read N- to C-terminus: Alanine racemase (355 aa).

K34 (proton acceptor; specific for D-alanine) is an active-site residue. K34 bears the N6-(pyridoxal phosphate)lysine mark. Substrate is bound at residue R133. Residue Y249 is the Proton acceptor; specific for L-alanine of the active site. Substrate is bound at residue M297.

This sequence belongs to the alanine racemase family. Pyridoxal 5'-phosphate serves as cofactor.

The enzyme catalyses L-alanine = D-alanine. It participates in amino-acid biosynthesis; D-alanine biosynthesis; D-alanine from L-alanine: step 1/1. Functionally, catalyzes the interconversion of L-alanine and D-alanine. May also act on other amino acids. This chain is Alanine racemase (alr), found in Rickettsia peacockii (strain Rustic).